Reading from the N-terminus, the 855-residue chain is Endochitinase 2 (855 aa).

The N-terminal stretch at 1–22 is a signal peptide; sequence MGPTNILAAFIAVSSLFIQSLA. The region spanning 29-340 is the GH18 domain; sequence SNLAVYWGQG…DIMKEVLLRC (312 aa). Residue Asn-90 is glycosylated (N-linked (GlcNAc...) asparagine). The active-site Proton donor is Glu-175. The interval 341–672 is disordered; sequence DPDPPTSTVT…APSSSTTEDR (332 aa). Low complexity predominate over residues 346-400; that stretch reads TSTVTSTTSASTSTQTSSQSTTMETKTLSASTTPSSPSTVSPSSTMQTTSTGSTS. Over residues 401–456 the composition is skewed to polar residues; sequence IETVTTRSQEPPSTTISTRSASTEPVTTRSQEPPSTTISTRSASTETVTTRSQEPP. Low complexity predominate over residues 457–483; sequence STTISTWSASTETSTSSQDSPSTTIST. Positions 484–521 are enriched in polar residues; the sequence is KSAPTGTVTTRSQDLPSTTISTRSPETETETATTKSQG. Residues 522 to 533 are compositionally biased toward low complexity; it reads SPSITLSTRSSS. The span at 534 to 555 shows a compositional bias: polar residues; the sequence is AETVSTRSQHSSSTTISTKSAP. Over residues 556–567 the composition is skewed to low complexity; sequence TETGTTSEHSTS. The segment covering 568-641 has biased composition (polar residues); the sequence is MPVSTRSAST…SQTPTTIITG (74 aa). 2 stretches are compositionally biased toward low complexity: residues 642–652 and 659–672; these read TPSDPVSAPTT and TLTLAPSSSTTEDR. Gly-826 carries the GPI-anchor amidated glycine lipid modification. A propeptide spans 827 to 855 (removed in mature form); sequence SAMTVRSMDVVAKALITAGAAVLGLFLGL.

It belongs to the glycosyl hydrolase 18 family. Chitinase class III subfamily.

The protein resides in the cell membrane. The enzyme catalyses Random endo-hydrolysis of N-acetyl-beta-D-glucosaminide (1-&gt;4)-beta-linkages in chitin and chitodextrins.. May be associated with endosporulation. The protein is Endochitinase 2 (CTS2) of Coccidioides posadasii (strain C735) (Valley fever fungus).